The following is a 422-amino-acid chain: L-2-hydroxyglutarate dehydrogenase (422 aa).

Belongs to the L2HGDH family. The cofactor is FAD.

It is found in the cell inner membrane. It carries out the reaction (S)-2-hydroxyglutarate + a quinone = a quinol + 2-oxoglutarate. The protein operates within amino-acid degradation. Functionally, catalyzes the dehydrogenation of L-2-hydroxyglutarate (L2HG) to alpha-ketoglutarate and couples to the respiratory chain by feeding electrons from the reaction into the membrane quinone pool. Functions in a L-lysine degradation pathway that proceeds via cadaverine, glutarate and L-2-hydroxyglutarate. In Escherichia coli (strain K12), this protein is L-2-hydroxyglutarate dehydrogenase.